The chain runs to 446 residues: Regulator of drug sensitivity 2 (446 aa).

Positions 15–45 form a DNA-binding region, zn(2)-C6 fungal-type; that stretch reads KTCLFCKRSHVVCDKQRPCSRCVKRDIAHLC. 2 disordered regions span residues 52–106 and 158–218; these read VPNE…PKLD and ASNV…KEES. Composition is skewed to polar residues over residues 56–70 and 84–96; these read MPSQHESSPNDNNIQ and DYQNEPVNKSGST. The residue at position 102 (Ser102) is a Phosphoserine. Over residues 160-177 the composition is skewed to polar residues; sequence NVHLENGSQTTQSPLEYQ. The span at 178–192 shows a compositional bias: basic and acidic residues; the sequence is NDNRRDEIGVARQEN. A compositionally biased stretch (polar residues) spans 193–206; that stretch reads RSPTIMSGSSNSIS. The span at 207-218 shows a compositional bias: basic and acidic residues; that stretch reads KGDKQDQEKEES. Phosphothreonine is present on Thr231.

In terms of processing, phosphorylated by SNF1 in absence of glucose. The phosphorylation is required for induction of transcription of gluconeogenic genes.

Its subcellular location is the cytoplasm. The protein localises to the nucleus. Its function is as follows. Transcription factor which regulates the expression of genes for gluconeogenesis, the TCA cycle, and glucose metabolism. Involved in the cell wall remodeling process and drug resistance. This Saccharomyces cerevisiae (strain ATCC 204508 / S288c) (Baker's yeast) protein is Regulator of drug sensitivity 2 (RDS2).